We begin with the raw amino-acid sequence, 311 residues long: Methionyl-tRNA formyltransferase (311 aa).

110–113 (SLLP) is a binding site for (6S)-5,6,7,8-tetrahydrofolate.

This sequence belongs to the Fmt family.

It carries out the reaction L-methionyl-tRNA(fMet) + (6R)-10-formyltetrahydrofolate = N-formyl-L-methionyl-tRNA(fMet) + (6S)-5,6,7,8-tetrahydrofolate + H(+). Attaches a formyl group to the free amino group of methionyl-tRNA(fMet). The formyl group appears to play a dual role in the initiator identity of N-formylmethionyl-tRNA by promoting its recognition by IF2 and preventing the misappropriation of this tRNA by the elongation apparatus. The chain is Methionyl-tRNA formyltransferase from Streptococcus equi subsp. equi (strain 4047).